A 433-amino-acid polypeptide reads, in one-letter code: NADH-quinone oxidoreductase subunit D (433 aa).

Belongs to the complex I 49 kDa subunit family. NDH-1 is composed of 14 different subunits. Subunits NuoB, C, D, E, F, and G constitute the peripheral sector of the complex.

The protein localises to the cell membrane. The enzyme catalyses a quinone + NADH + 5 H(+)(in) = a quinol + NAD(+) + 4 H(+)(out). NDH-1 shuttles electrons from NADH, via FMN and iron-sulfur (Fe-S) centers, to quinones in the respiratory chain. The immediate electron acceptor for the enzyme in this species is believed to be a menaquinone. Couples the redox reaction to proton translocation (for every two electrons transferred, four hydrogen ions are translocated across the cytoplasmic membrane), and thus conserves the redox energy in a proton gradient. This chain is NADH-quinone oxidoreductase subunit D, found in Cutibacterium acnes (strain DSM 16379 / KPA171202) (Propionibacterium acnes).